A 1412-amino-acid chain; its full sequence is DNA-directed RNA polymerase subunit beta'' (1412 aa).

Zn(2+) is bound by residues Cys220, Cys294, Cys301, and Cys304.

The protein belongs to the RNA polymerase beta' chain family. RpoC2 subfamily. In terms of assembly, in plastids the minimal PEP RNA polymerase catalytic core is composed of four subunits: alpha, beta, beta', and beta''. When a (nuclear-encoded) sigma factor is associated with the core the holoenzyme is formed, which can initiate transcription. Zn(2+) is required as a cofactor.

The protein resides in the plastid. Its subcellular location is the chloroplast. The enzyme catalyses RNA(n) + a ribonucleoside 5'-triphosphate = RNA(n+1) + diphosphate. Functionally, DNA-dependent RNA polymerase catalyzes the transcription of DNA into RNA using the four ribonucleoside triphosphates as substrates. The protein is DNA-directed RNA polymerase subunit beta'' of Chara vulgaris (Common stonewort).